We begin with the raw amino-acid sequence, 43 residues long: Protein PsbN (43 aa).

The chain crosses the membrane as a helical span at residues 5–27; it reads TLVAISISGLLVSFTGYALYTAF.

Belongs to the PsbN family.

It localises to the plastid. The protein resides in the chloroplast thylakoid membrane. Its function is as follows. May play a role in photosystem I and II biogenesis. This chain is Protein PsbN, found in Houttuynia cordata (Chameleon plant).